Here is a 227-residue protein sequence, read N- to C-terminus: 2,3-bisphosphoglycerate-dependent phosphoglycerate mutase (227 aa).

Substrate contacts are provided by residues Arg7 to Asn14, Thr20 to Gly21, Arg59, Glu86 to Tyr89, Lys97, Arg113 to Arg114, and Gly182 to Asn183. Catalysis depends on His8, which acts as the Tele-phosphohistidine intermediate. Glu86 acts as the Proton donor/acceptor in catalysis.

The protein belongs to the phosphoglycerate mutase family. BPG-dependent PGAM subfamily. In terms of assembly, homodimer.

It catalyses the reaction (2R)-2-phosphoglycerate = (2R)-3-phosphoglycerate. It participates in carbohydrate degradation; glycolysis; pyruvate from D-glyceraldehyde 3-phosphate: step 3/5. Its function is as follows. Catalyzes the interconversion of 2-phosphoglycerate and 3-phosphoglycerate. This Haemophilus influenzae (strain PittGG) protein is 2,3-bisphosphoglycerate-dependent phosphoglycerate mutase.